The sequence spans 358 residues: Ion-translocating oxidoreductase complex subunit D (358 aa).

Transmembrane regions (helical) follow at residues Val-16–Trp-36, Phe-38–Val-58, Ile-68–Pro-90, Ala-128–Leu-148, Phe-206–Leu-226, Ile-236–Pro-256, and Pro-286–Ile-306.

The protein belongs to the NqrB/RnfD family. In terms of assembly, the complex is composed of six subunits: RnfA, RnfB, RnfC, RnfD, RnfE and RnfG. The cofactor is FMN.

The protein localises to the cellular chromatophore membrane. Functionally, part of a membrane-bound complex that couples electron transfer with translocation of ions across the membrane. Required for nitrogen fixation. Involved in electron transfer to nitrogenase. This is Ion-translocating oxidoreductase complex subunit D from Rhodobacter capsulatus (Rhodopseudomonas capsulata).